The sequence spans 550 residues: ATP synthase subunit alpha (550 aa).

Residue 172–179 (GDRKTGKT) coordinates ATP. Positions 521–550 (EPAAEPLAGEEDRETVTRFHDDATDRPAGS) are disordered. Residues 534–550 (ETVTRFHDDATDRPAGS) show a composition bias toward basic and acidic residues.

It belongs to the ATPase alpha/beta chains family. In terms of assembly, F-type ATPases have 2 components, CF(1) - the catalytic core - and CF(0) - the membrane proton channel. CF(1) has five subunits: alpha(3), beta(3), gamma(1), delta(1), epsilon(1). CF(0) has three main subunits: a(1), b(2) and c(9-12). The alpha and beta chains form an alternating ring which encloses part of the gamma chain. CF(1) is attached to CF(0) by a central stalk formed by the gamma and epsilon chains, while a peripheral stalk is formed by the delta and b chains.

It is found in the cell membrane. It carries out the reaction ATP + H2O + 4 H(+)(in) = ADP + phosphate + 5 H(+)(out). Produces ATP from ADP in the presence of a proton gradient across the membrane. The alpha chain is a regulatory subunit. This is ATP synthase subunit alpha from Salinispora tropica (strain ATCC BAA-916 / DSM 44818 / JCM 13857 / NBRC 105044 / CNB-440).